Reading from the N-terminus, the 343-residue chain is E3 ubiquitin-protein ligase SP1 (343 aa).

A helical membrane pass occupies residues 1–21; it reads MIPWGGVTCCLSAAALYLLGR. The Chloroplast intermembrane portion of the chain corresponds to 22–222; sequence SSGRDAEVLE…LISNLGKWSR (201 aa). Residues 223–244 form a helical membrane-spanning segment; the sequence is LYKYASMGFTVLGVFLITKHVI. Topologically, residues 245 to 343 are cytoplasmic; sequence DSVLERRRRR…IDLAVKTYRH (99 aa). The segment at 296–331 adopts an RING-type zinc-finger fold; that stretch reads CVICLEQEYNAVFVPCGHMCCCTACSSHLTSCPLCR.

Interacts with TOC33, TOC75-3 and TOC159. Post-translationally, auto-ubiquitinated.

Its subcellular location is the plastid. The protein localises to the chloroplast outer membrane. It carries out the reaction S-ubiquitinyl-[E2 ubiquitin-conjugating enzyme]-L-cysteine + [acceptor protein]-L-lysine = [E2 ubiquitin-conjugating enzyme]-L-cysteine + N(6)-ubiquitinyl-[acceptor protein]-L-lysine.. It participates in protein modification; protein ubiquitination. In terms of biological role, E3 ubiquitin-protein ligase involved in the regulation of protein import in the chloroplast. Associates with TOC complexes and mediates ubiquitination of TOC components, promoting their degradation via the ubiquitin-proteasome system (UPS). Plays a role in the reorganization of the TOC machinery. Involved in a mechanism that regulates plastid biogenesis via UPS. Promotes stress tolerance by depleting the chloroplast protein import apparatus, which limits photosystem assembly and the potential for reactive oxygen species (ROS) formation. May act as negative regulator of programmed cell death (PCD) during biotic stress. The polypeptide is E3 ubiquitin-protein ligase SP1 (Arabidopsis thaliana (Mouse-ear cress)).